Here is a 213-residue protein sequence, read N- to C-terminus: Probable transaldolase (213 aa).

The active-site Schiff-base intermediate with substrate is K83.

The protein belongs to the transaldolase family. Type 3B subfamily.

Its subcellular location is the cytoplasm. It carries out the reaction D-sedoheptulose 7-phosphate + D-glyceraldehyde 3-phosphate = D-erythrose 4-phosphate + beta-D-fructose 6-phosphate. Its pathway is carbohydrate degradation; pentose phosphate pathway; D-glyceraldehyde 3-phosphate and beta-D-fructose 6-phosphate from D-ribose 5-phosphate and D-xylulose 5-phosphate (non-oxidative stage): step 2/3. Functionally, transaldolase is important for the balance of metabolites in the pentose-phosphate pathway. This Geobacillus kaustophilus (strain HTA426) protein is Probable transaldolase.